Consider the following 227-residue polypeptide: Cytochrome c oxidase subunit 2 (227 aa).

Residues 1 to 14 (MAYPFQLGLQDASS) lie on the Mitochondrial intermembrane side of the membrane. A helical membrane pass occupies residues 15–45 (PIMEELTNFHDHTLMIVFLISSLVLYIISSM). Topologically, residues 46 to 59 (LTTKMTHTSTMDAQ) are mitochondrial matrix. A helical membrane pass occupies residues 60 to 87 (EVETIWTVLPAVILILIALPSLRILYMM). Residues 88 to 227 (DEINNPVLTV…HFENWSTSMI (140 aa)) lie on the Mitochondrial intermembrane side of the membrane. The Cu cation site is built by His-161, Cys-196, Glu-198, Cys-200, His-204, and Met-207. Glu-198 lines the Mg(2+) pocket.

Belongs to the cytochrome c oxidase subunit 2 family. In terms of assembly, component of the cytochrome c oxidase (complex IV, CIV), a multisubunit enzyme composed of 14 subunits. The complex is composed of a catalytic core of 3 subunits MT-CO1, MT-CO2 and MT-CO3, encoded in the mitochondrial DNA, and 11 supernumerary subunits COX4I, COX5A, COX5B, COX6A, COX6B, COX6C, COX7A, COX7B, COX7C, COX8 and NDUFA4, which are encoded in the nuclear genome. The complex exists as a monomer or a dimer and forms supercomplexes (SCs) in the inner mitochondrial membrane with NADH-ubiquinone oxidoreductase (complex I, CI) and ubiquinol-cytochrome c oxidoreductase (cytochrome b-c1 complex, complex III, CIII), resulting in different assemblies (supercomplex SCI(1)III(2)IV(1) and megacomplex MCI(2)III(2)IV(2)). Found in a complex with TMEM177, COA6, COX18, COX20, SCO1 and SCO2. Interacts with TMEM177 in a COX20-dependent manner. Interacts with COX20. Interacts with COX16. Cu cation serves as cofactor.

The protein localises to the mitochondrion inner membrane. The enzyme catalyses 4 Fe(II)-[cytochrome c] + O2 + 8 H(+)(in) = 4 Fe(III)-[cytochrome c] + 2 H2O + 4 H(+)(out). Its function is as follows. Component of the cytochrome c oxidase, the last enzyme in the mitochondrial electron transport chain which drives oxidative phosphorylation. The respiratory chain contains 3 multisubunit complexes succinate dehydrogenase (complex II, CII), ubiquinol-cytochrome c oxidoreductase (cytochrome b-c1 complex, complex III, CIII) and cytochrome c oxidase (complex IV, CIV), that cooperate to transfer electrons derived from NADH and succinate to molecular oxygen, creating an electrochemical gradient over the inner membrane that drives transmembrane transport and the ATP synthase. Cytochrome c oxidase is the component of the respiratory chain that catalyzes the reduction of oxygen to water. Electrons originating from reduced cytochrome c in the intermembrane space (IMS) are transferred via the dinuclear copper A center (CU(A)) of subunit 2 and heme A of subunit 1 to the active site in subunit 1, a binuclear center (BNC) formed by heme A3 and copper B (CU(B)). The BNC reduces molecular oxygen to 2 water molecules using 4 electrons from cytochrome c in the IMS and 4 protons from the mitochondrial matrix. This is Cytochrome c oxidase subunit 2 (MT-CO2) from Lophuromys flavopunctatus (Yellow-spotted brush-furred rat).